Here is a 438-residue protein sequence, read N- to C-terminus: GTPase Der (438 aa).

EngA-type G domains follow at residues 4 to 168 and 177 to 352; these read PIVA…KNEG and IKIA…DNYC. GTP is bound by residues 10–17, 57–61, 120–123, 183–190, 230–234, and 295–298; these read GRPNVGKS, DTGGI, NKID, GKPNVGKS, DTAGV, and NKWD. The 85-residue stretch at 353-437 folds into the KH-like domain; sequence KQIKTGILND…GIKLEFRERK (85 aa).

The protein belongs to the TRAFAC class TrmE-Era-EngA-EngB-Septin-like GTPase superfamily. EngA (Der) GTPase family. Associates with the 50S ribosomal subunit.

GTPase that plays an essential role in the late steps of ribosome biogenesis. This is GTPase Der from Clostridium kluyveri (strain NBRC 12016).